We begin with the raw amino-acid sequence, 309 residues long: RING finger protein mug145 (309 aa).

A helical transmembrane segment spans residues 23–43; it reads ILLFALVIILSVIFINFFFFY. The RING-type; atypical zinc finger occupies 205–247; that stretch reads CIICYADYAFDDILRVLPCEHVFHTQCIDTWMTTMKASCPLCN.

The protein localises to the membrane. In terms of biological role, has a role in meiosis. The protein is RING finger protein mug145 (mug145) of Schizosaccharomyces pombe (strain 972 / ATCC 24843) (Fission yeast).